Reading from the N-terminus, the 449-residue chain is Histidinol dehydrogenase (449 aa).

3 residues coordinate NAD(+): Tyr-135, Gln-199, and Asn-229. Thr-252, Gln-274, and His-277 together coordinate substrate. Residues Gln-274 and His-277 each contribute to the Zn(2+) site. Residues Glu-343 and His-344 each act as proton acceptor in the active site. 4 residues coordinate substrate: His-344, Asp-377, Glu-431, and His-436. Asp-377 provides a ligand contact to Zn(2+). A Zn(2+)-binding site is contributed by His-436.

This sequence belongs to the histidinol dehydrogenase family. It depends on Zn(2+) as a cofactor.

It carries out the reaction L-histidinol + 2 NAD(+) + H2O = L-histidine + 2 NADH + 3 H(+). It functions in the pathway amino-acid biosynthesis; L-histidine biosynthesis; L-histidine from 5-phospho-alpha-D-ribose 1-diphosphate: step 9/9. In terms of biological role, catalyzes the sequential NAD-dependent oxidations of L-histidinol to L-histidinaldehyde and then to L-histidine. The protein is Histidinol dehydrogenase of Corynebacterium diphtheriae (strain ATCC 700971 / NCTC 13129 / Biotype gravis).